The primary structure comprises 242 residues: Type III pantothenate kinase (242 aa).

Asp-7–Lys-14 contacts ATP. Residues Tyr-91 and Gly-98–Arg-101 each bind substrate. The active-site Proton acceptor is the Asp-100. ATP is bound at residue Thr-121. A substrate-binding site is contributed by Thr-171.

The protein belongs to the type III pantothenate kinase family. As to quaternary structure, homodimer. The cofactor is NH4(+). It depends on K(+) as a cofactor.

The protein resides in the cytoplasm. The catalysed reaction is (R)-pantothenate + ATP = (R)-4'-phosphopantothenate + ADP + H(+). The protein operates within cofactor biosynthesis; coenzyme A biosynthesis; CoA from (R)-pantothenate: step 1/5. Functionally, catalyzes the phosphorylation of pantothenate (Pan), the first step in CoA biosynthesis. The chain is Type III pantothenate kinase from Xylella fastidiosa (strain M23).